The following is a 229-amino-acid chain: Potassium/proton antiporter CemA (229 aa).

The next 4 helical transmembrane spans lie at 7 to 27 (FNPL…SFSF), 107 to 127 (ILNF…YILG), 154 to 174 (ILLL…ELMI), and 189 to 209 (IISG…KYLI).

Belongs to the CemA family.

It localises to the plastid. The protein resides in the chloroplast inner membrane. The catalysed reaction is K(+)(in) + H(+)(out) = K(+)(out) + H(+)(in). In terms of biological role, contributes to K(+)/H(+) antiport activity by supporting proton efflux to control proton extrusion and homeostasis in chloroplasts in a light-dependent manner to modulate photosynthesis. Prevents excessive induction of non-photochemical quenching (NPQ) under continuous-light conditions. Indirectly promotes efficient inorganic carbon uptake into chloroplasts. The protein is Potassium/proton antiporter CemA of Ranunculus macranthus (Large buttercup).